The following is a 415-amino-acid chain: Putative F-box protein At5g40050 (415 aa).

The 47-residue stretch at 13 to 59 (IDSISPLPDELLSHILSFLPTKRAASTSILSKRWRTLFPLMNHLCAS) folds into the F-box domain.

The protein is Putative F-box protein At5g40050 of Arabidopsis thaliana (Mouse-ear cress).